Here is a 540-residue protein sequence, read N- to C-terminus: MLO protein homolog 1 (540 aa).

At 1–16 the chain is on the extracellular side; that stretch reads MAGGRSGSRELPETPT. The chain crosses the membrane as a helical span at residues 17 to 37; that stretch reads WAVAVVCAVLVLVSAAMEHGL. At 38-60 the chain is on the cytoplasmic side; sequence HNLSHWFRRRQKKAMGDALDKIK. The helical transmembrane segment at 61–81 threads the bilayer; sequence AELMLLGFISLLLTVAQAPIS. Residues 82–142 are Extracellular-facing; that stretch reads KICIPKSAAN…MSAKSMHQLH (61 aa). Residues 143-163 traverse the membrane as a helical segment; the sequence is IFIFVLAVFHVTYCIITMGLG. Residues 164–265 lie on the Cytoplasmic side of the membrane; that stretch reads RLKMKKWKKW…IKRSLEDDFK (102 aa). Residues 266 to 286 traverse the membrane as a helical segment; the sequence is VVVGISLPLWFVGILVLFLDI. Residue H287 is a topological domain, extracellular. A helical transmembrane segment spans residues 288–308; it reads GLGTLIWISFVPLIIVLLVGT. Residues 309–347 are Cytoplasmic-facing; it reads KLEMVIMEMAQEIQDRATVIQGAPMVEPSNKYFWFNRPD. The chain crosses the membrane as a helical span at residues 348 to 368; it reads WVLFFIHLTLFHNAFQMAHFV. Residues 369–383 lie on the Extracellular side of the membrane; that stretch reads WTMATPGLKKCFHEN. A helical membrane pass occupies residues 384–404; the sequence is IWLSIVEVIVGISLQVLCSYI. Over 405-540 the chain is Cytoplasmic; that stretch reads TFPLYALVTQ…DSDFSFSAQR (136 aa). The calmodulin-binding stretch occupies residues 426 to 447; that stretch reads EQTMKALMNWRKKAMEKKKVRD. The tract at residues 468–526 is disordered; the sequence is ASPVHLLQDHRARSDDPPSPITVASPPAPEEDMYPVPAAAASRQLLDDPPDRRWMASSS. 2 stretches are compositionally biased toward basic and acidic residues: residues 474–483 and 512–521; these read LQDHRARSDD and LLDDPPDRRW.

It belongs to the MLO family.

Its subcellular location is the membrane. Its function is as follows. May be involved in modulation of pathogen defense and leaf cell death. Activity seems to be regulated by Ca(2+)-dependent calmodulin binding and seems not to require heterotrimeric G proteins. The chain is MLO protein homolog 1 (MLO1) from Oryza sativa subsp. indica (Rice).